We begin with the raw amino-acid sequence, 1060 residues long: RNA-binding protein 27 (1060 aa).

Basic and acidic residues-rich tracts occupy residues 91 to 102 (LVQEKEEIKEEV) and 124 to 143 (TRSE…DGKW). 2 disordered regions span residues 91-143 (LVQE…DGKW) and 162-235 (WRRG…GAQS). Positions 165 to 185 (GRSKSRSKSRGLSRSRSRSRG) are enriched in basic residues. The span at 186-211 (RSKDRDPNRNVEHRERSKFKSERNDL) shows a compositional bias: basic and acidic residues. The segment covering 225 to 235 (SSEQYSSGAQS) has biased composition (polar residues). Residues 273 to 301 (LPPKRRCRDYDERGFCVLGDLCQFDHGND) form a C3H1-type zinc finger. 2 stretches are compositionally biased toward pro residues: residues 319–356 (PPPG…PGPG) and 371–384 (QPPP…PRPP). Residues 319–412 (PPPGLPPPPP…PNLASVGTRL (94 aa)) form a disordered region. Over residues 386 to 402 (TQSSLINSRDQPGTSAV) the composition is skewed to polar residues. Residue T447 is modified to Phosphothreonine. At R455 the chain carries Omega-N-methylarginine. The interval 565–592 (MSGLEGPLTKKPWLGKQGNNNQNKPGFL) is disordered. The span at 579–588 (GKQGNNNQNK) shows a compositional bias: low complexity. An RRM domain is found at 600-674 (TKLEVKKIPQ…RFIRVLWHRE (75 aa)). Positions 809 to 886 (VQEVLKKKQE…KDELKTSSAV (78 aa)) form a coiled coil. S927 bears the Phosphoserine mark. 2 disordered regions span residues 940–968 (PVGR…SLNH) and 1006–1060 (DRRL…SWRR). Phosphoserine occurs at positions 1012 and 1020. Residues 1024-1053 (ETEEEEVKEEETETSDLFLPDDDDEDEDEY) show a composition bias toward acidic residues.

It is found in the cytoplasm. The protein localises to the nucleus speckle. In terms of biological role, may be involved in the turnover of nuclear polyadenylated (pA+) RNA. The protein is RNA-binding protein 27 of Homo sapiens (Human).